A 297-amino-acid chain; its full sequence is Polyhedral envelope protein (297 aa).

It belongs to the baculoviridae PE family.

The protein localises to the virion membrane. Functionally, major component of the polyhedra envelope. The protein is Polyhedral envelope protein of Orgyia pseudotsugata (Douglas-fir tussock moth).